Consider the following 509-residue polypeptide: Putative thymidine phosphorylase (509 aa).

This sequence belongs to the thymidine/pyrimidine-nucleoside phosphorylase family. Type 2 subfamily.

It carries out the reaction thymidine + phosphate = 2-deoxy-alpha-D-ribose 1-phosphate + thymine. This is Putative thymidine phosphorylase from Chelativorans sp. (strain BNC1).